Reading from the N-terminus, the 570-residue chain is MPYKISRAAYAGMFGPTTGDKVRLADTELFIEIEKDFTTYGEEVKFGGGKVIRDGMGQSQVTRADGAVDTVITNAVIVDHSGIYKADIGLKDGRIVAIGKAGNPDMQPGVNIIVGPGTEAIAAEGKIVTAGGMDSHIHFIAPQQIEEALMSGMTCMLGGGTGPAHGTLATTCTPGPWHLARMIEAADAFPMNLAFAGKGNASLPGALTEMVLAGATSLKLHEDWGTTPGAIDCCLSVADEYDVQVMIHTDTLNESGFVEDTIGAIKGRTIHAFHTEGAGGGHAPDIIKICGQPNVIPSSTNPTRPYTVNTIAEHLDMLMVCHHLSPSIPEDIAFAESRIRKETIAAEDILHDIGAFSIISSDSQAMGRVGEVAIRTWQTADKMKRQRGRLKEEKGDNDNFRVRRYIAKYTINPAIAHGLSREIGSVEVGKRADLVLWNPAFFGVKPDMVLLGGSIAAAPMGDPNASIPTPQPVHYRPMFASYGKSLTNSSVTFVSQASLDAGLKGRLGVAKELVAVKNTRGGISKASMIHNDLTPEIEVDPETYEVRANGELLACEPATVLPMAQRYFLF.

The 440-residue stretch at 131–570 (GGMDSHIHFI…LPMAQRYFLF (440 aa)) folds into the Urease domain. Positions 136, 138, and 219 each coordinate Ni(2+). Lys219 is subject to N6-carboxylysine. His221 is a binding site for substrate. Residues His248 and His274 each contribute to the Ni(2+) site. The Proton donor role is filled by His322. Residue Asp362 coordinates Ni(2+).

Belongs to the metallo-dependent hydrolases superfamily. Urease alpha subunit family. Heterotrimer of UreA (gamma), UreB (beta) and UreC (alpha) subunits. Three heterotrimers associate to form the active enzyme. It depends on Ni cation as a cofactor. Post-translationally, carboxylation allows a single lysine to coordinate two nickel ions.

Its subcellular location is the cytoplasm. The catalysed reaction is urea + 2 H2O + H(+) = hydrogencarbonate + 2 NH4(+). It participates in nitrogen metabolism; urea degradation; CO(2) and NH(3) from urea (urease route): step 1/1. The sequence is that of Urease subunit alpha from Rhizobium johnstonii (strain DSM 114642 / LMG 32736 / 3841) (Rhizobium leguminosarum bv. viciae).